The chain runs to 438 residues: MKASAEKIDKNRVELQVEVEPERLDEVLNQAYRKLVRKANIPGFRPGKAPRPVFERFYGKQSLYEEAMEQLIPRAYLEAVADTGIQPVSQPEVDVVQLEEGKPVILKIQVDVKPEVVLGEYKNLKVERQVAEVSDSEVDEELEKLRNRYAKLVTIEEGTVEMGDIITIDYEGTINGEPFAGGSATDRSVEVGKGFVAKDFDAHLVGMSTGETREIPLSIPEDFPNKEVAGKEALITVTVKEIKRKELADLDDEFAKDVSEHDTLEALRAETRKKLENAAEKKIEYVMRNALISEAVAGAEVEVPASMVDARLETMMEEVLRPVIEQGMTKEDFFKLTNQTEESMRADIRPRAEESLKKELVIDRIAEVEGLEATEEEVDAELAKMAEFYRLEADRLREILEQRNDLDSIRTAIKRDKAVDLLVANAEIVGQESTEAEK.

Positions 163–248 (GDIITIDYEG…VKEIKRKELA (86 aa)) constitute a PPIase FKBP-type domain.

This sequence belongs to the FKBP-type PPIase family. Tig subfamily.

The protein resides in the cytoplasm. It catalyses the reaction [protein]-peptidylproline (omega=180) = [protein]-peptidylproline (omega=0). Functionally, involved in protein export. Acts as a chaperone by maintaining the newly synthesized protein in an open conformation. Functions as a peptidyl-prolyl cis-trans isomerase. The chain is Trigger factor from Desulforudis audaxviator (strain MP104C).